The chain runs to 126 residues: Urease subunit beta (126 aa).

This sequence belongs to the urease beta subunit family. In terms of assembly, heterotrimer of UreA (gamma), UreB (beta) and UreC (alpha) subunits. Three heterotrimers associate to form the active enzyme.

The protein localises to the cytoplasm. It catalyses the reaction urea + 2 H2O + H(+) = hydrogencarbonate + 2 NH4(+). It functions in the pathway nitrogen metabolism; urea degradation; CO(2) and NH(3) from urea (urease route): step 1/1. This is Urease subunit beta from Gloeothece citriformis (strain PCC 7424) (Cyanothece sp. (strain PCC 7424)).